Consider the following 155-residue polypeptide: UPF0178 protein ACIAD2644 (155 aa).

Residues 120-155 (GAGVQTGGPPPISERDKREFSSALDQTILKQKRKTA) are disordered.

Belongs to the UPF0178 family.

The polypeptide is UPF0178 protein ACIAD2644 (Acinetobacter baylyi (strain ATCC 33305 / BD413 / ADP1)).